The primary structure comprises 226 residues: tRNA (guanine-N(7)-)-methyltransferase (226 aa).

Positions 59, 84, and 111 each coordinate S-adenosyl-L-methionine. Substrate is bound at residue D169.

This sequence belongs to the class I-like SAM-binding methyltransferase superfamily. TrmB family.

It catalyses the reaction guanosine(46) in tRNA + S-adenosyl-L-methionine = N(7)-methylguanosine(46) in tRNA + S-adenosyl-L-homocysteine. It participates in tRNA modification; N(7)-methylguanine-tRNA biosynthesis. Functionally, catalyzes the formation of N(7)-methylguanine at position 46 (m7G46) in tRNA. This chain is tRNA (guanine-N(7)-)-methyltransferase, found in Chloroherpeton thalassium (strain ATCC 35110 / GB-78).